Consider the following 207-residue polypeptide: 2,3-bisphosphoglycerate-dependent phosphoglycerate mutase (207 aa).

Residues 10–17, 23–24, Arg-62, 89–92, Lys-100, 116–117, and 160–161 each bind substrate; these read RHGQSEWN, TG, ERDY, RR, and GN. His-11 acts as the Tele-phosphohistidine intermediate in catalysis. Glu-89 acts as the Proton donor/acceptor in catalysis.

Belongs to the phosphoglycerate mutase family. BPG-dependent PGAM subfamily. Homodimer.

It carries out the reaction (2R)-2-phosphoglycerate = (2R)-3-phosphoglycerate. It functions in the pathway carbohydrate degradation; glycolysis; pyruvate from D-glyceraldehyde 3-phosphate: step 3/5. Its function is as follows. Catalyzes the interconversion of 2-phosphoglycerate and 3-phosphoglycerate. The polypeptide is 2,3-bisphosphoglycerate-dependent phosphoglycerate mutase (Afipia carboxidovorans (strain ATCC 49405 / DSM 1227 / KCTC 32145 / OM5) (Oligotropha carboxidovorans)).